The sequence spans 568 residues: Urease subunit alpha (568 aa).

The 439-residue stretch at 130-568 folds into the Urease domain; that stretch reads GGIDTHIHFI…LPMAQRYFLF (439 aa). Ni(2+) is bound by residues His-135, His-137, and Lys-218. Lys-218 bears the N6-carboxylysine mark. His-220 provides a ligand contact to substrate. Residues His-247 and His-273 each contribute to the Ni(2+) site. His-321 functions as the Proton donor in the catalytic mechanism. Residue Asp-361 coordinates Ni(2+).

It belongs to the metallo-dependent hydrolases superfamily. Urease alpha subunit family. Heterotrimer of UreA (gamma), UreB (beta) and UreC (alpha) subunits. Three heterotrimers associate to form the active enzyme. It depends on Ni cation as a cofactor. Carboxylation allows a single lysine to coordinate two nickel ions.

It is found in the cytoplasm. The enzyme catalyses urea + 2 H2O + H(+) = hydrogencarbonate + 2 NH4(+). The protein operates within nitrogen metabolism; urea degradation; CO(2) and NH(3) from urea (urease route): step 1/1. The protein is Urease subunit alpha of Burkholderia vietnamiensis (strain G4 / LMG 22486) (Burkholderia cepacia (strain R1808)).